Consider the following 836-residue polypeptide: MLLSTWTPGCFQGNKILLRSLITWYYLEFMPKLRPFYFLFYLTLPSCATDSPPISDKSSSIFLPLAQQQQLVHWMMPPRFRCQDYLLPLLLALSPAAAAAREVEYHHCHCDGGGGGGGGGLWSMDSIFRRQKVSDLLIAAAYFSIPLEILYFVAGLRHLLPFRWVLVQFGAFIVLCGLTHLLTAFTYEPHPFMVVLLLTTAKFLTALVSFLTAITLLTLIPQLLRVKVRESLLWLKARELDREVVLMKRQEEASWHVRMLTHEIRKSLDRHTVLYTTLIELSLVLGLTNCAVWMPAAGEMCLTHELRRDGGGEDGVVGVDDADVVEVRGSDGVKLLGPDSVLAAASGGKEEGTGAVAAIRMPMLKVSDFKGGTPEVIQTSYAVLVLVPPAGKSWGRHEMEIVEVVAGQVAVALSHATLLEESRAMRDRLAEQNRELLQARRDALMANEARQAFQGVMSQGMRRPIHSILGLVSMVQEEALAPEQRLVVDTMARTATVVSTLVNDVMEMSADSRERFPLETRPFHLHAMIRDAACVARCLCDFRGFGFAVHVENALPDLVVGDERRIFHVLLHMVGNLIGRTEPGHVTLRVRAADDDVLDDRLGQRWDPRWPSYSTGYSSVKFVIGVKRQQNGDAGSPLSRRPSGKGIDLRLSFSMCRKLVQMMQGNIWAINDPQGLPESMTLVLRFQLQSPLTSSSLGGSFEQKHSSPSCQIAGLKVLLIDDDDDINLVVARKLLEKLGCVVSSPPSGSGFLSSVGSSAAAFQLVMVNLEMKRVKALDVATRISQYRSGRWPIVMAMASDQKAWEKCAQSGINGILKKPVILQELKDELARILQST.

Helical transmembrane passes span 137–157 (LIAA…AGLR), 166–186 (LVQF…TAFT), and 204–224 (LTAL…PQLL). Residues Cys-176 and His-180 each contribute to the Cu cation site. The 145-residue stretch at 269-413 (DRHTVLYTTL…VVAGQVAVAL (145 aa)) folds into the GAF domain. The stretch at 416-452 (ATLLEESRAMRDRLAEQNRELLQARRDALMANEARQA) forms a coiled coil. In terms of domain architecture, Histidine kinase spans 457-691 (MSQGMRRPIH…LVLRFQLQSP (235 aa)). Residues 718–834 (LLIDDDDDIN…LKDELARILQ (117 aa)) enclose the Response regulatory domain.

This sequence belongs to the ethylene receptor family. The cofactor is Cu cation.

The protein resides in the endoplasmic reticulum membrane. The catalysed reaction is ATP + protein L-histidine = ADP + protein N-phospho-L-histidine.. Functionally, ethylene receptor related to bacterial two-component regulators. Acts as a negative regulator of ethylene signaling. May delay the transition from the vegetative stage to the floral stage by up-regulating GI (GIGANTEA) and RCN1 and cause starch accumulation in stems by down-regulating the alpha-amylase AMY3D. In Oryza sativa subsp. indica (Rice), this protein is Ethylene receptor 3.